We begin with the raw amino-acid sequence, 22 residues long: Putative lactoylglutathione lyase (22 aa).

Residues 1–22 (ITACLDPDGWKEPGPLPGISTK) are disordered. The active-site Proton donor/acceptor is glutamate 12.

It belongs to the glyoxalase I family. The cofactor is Zn(2+).

The catalysed reaction is (R)-S-lactoylglutathione = methylglyoxal + glutathione. It participates in secondary metabolite metabolism; methylglyoxal degradation; (R)-lactate from methylglyoxal: step 1/2. Functionally, catalyzes the conversion of hemimercaptal, formed from methylglyoxal and glutathione, to S-lactoylglutathione. The polypeptide is Putative lactoylglutathione lyase (Pinus strobus (Eastern white pine)).